We begin with the raw amino-acid sequence, 905 residues long: Catenin alpha-2 (905 aa).

Threonine 632 carries the phosphothreonine modification. Serine 640, serine 651, and serine 853 each carry phosphoserine. Residues 869-879 are compositionally biased toward basic and acidic residues; sequence VKREKPEEFQT. Residues 869–891 are disordered; that stretch reads VKREKPEEFQTRVRRGSQKKHIS. Positions 880-890 are enriched in basic residues; that stretch reads RVRRGSQKKHI. A Phosphoserine modification is found at serine 891.

Belongs to the vinculin/alpha-catenin family. As to quaternary structure, interacts with CDH1 and CDH2. Interacts with ZNF639; recruits CTNNA2 to the nucleus. Interacts with F-actin.

The protein localises to the cell membrane. It localises to the cytoplasm. It is found in the cytoskeleton. Its subcellular location is the cell junction. The protein resides in the adherens junction. The protein localises to the cell projection. It localises to the axon. It is found in the nucleus. In terms of biological role, may function as a linker between cadherin adhesion receptors and the cytoskeleton to regulate cell-cell adhesion and differentiation in the nervous system. Required for proper regulation of cortical neuronal migration and neurite growth. It acts as a negative regulator of Arp2/3 complex activity and Arp2/3-mediated actin polymerization. It thereby suppresses excessive actin branching which would impair neurite growth and stability. Regulates morphological plasticity of synapses and cerebellar and hippocampal lamination during development. Functions in the control of startle modulation. The chain is Catenin alpha-2 (CTNNA2) from Pongo abelii (Sumatran orangutan).